A 228-amino-acid polypeptide reads, in one-letter code: uncharacterized protein (228 aa).

It to E.coli YbfG.

This is an uncharacterized protein from Haemophilus influenzae (strain ATCC 51907 / DSM 11121 / KW20 / Rd).